A 506-amino-acid polypeptide reads, in one-letter code: ATP synthase subunit alpha (506 aa).

171 to 178 (GDRQTGKT) provides a ligand contact to ATP.

Belongs to the ATPase alpha/beta chains family. In terms of assembly, F-type ATPases have 2 components, CF(1) - the catalytic core - and CF(0) - the membrane proton channel. CF(1) has five subunits: alpha(3), beta(3), gamma(1), delta(1), epsilon(1). CF(0) has four main subunits: a(1), b(1), b'(1) and c(9-12).

The protein localises to the cellular thylakoid membrane. The enzyme catalyses ATP + H2O + 4 H(+)(in) = ADP + phosphate + 5 H(+)(out). In terms of biological role, produces ATP from ADP in the presence of a proton gradient across the membrane. The alpha chain is a regulatory subunit. In Nostoc sp. (strain PCC 7120 / SAG 25.82 / UTEX 2576), this protein is ATP synthase subunit alpha.